Reading from the N-terminus, the 354-residue chain is Chorismate synthase (354 aa).

2 residues coordinate NADP(+): Arg-48 and Arg-54. Residues 125-127 (RSS), 238-239 (NA), Gly-278, 293-297 (KPTSS), and Arg-319 each bind FMN.

The protein belongs to the chorismate synthase family. Homotetramer. FMNH2 is required as a cofactor.

It catalyses the reaction 5-O-(1-carboxyvinyl)-3-phosphoshikimate = chorismate + phosphate. It participates in metabolic intermediate biosynthesis; chorismate biosynthesis; chorismate from D-erythrose 4-phosphate and phosphoenolpyruvate: step 7/7. Catalyzes the anti-1,4-elimination of the C-3 phosphate and the C-6 proR hydrogen from 5-enolpyruvylshikimate-3-phosphate (EPSP) to yield chorismate, which is the branch point compound that serves as the starting substrate for the three terminal pathways of aromatic amino acid biosynthesis. This reaction introduces a second double bond into the aromatic ring system. The polypeptide is Chorismate synthase (Buchnera aphidicola subsp. Acyrthosiphon pisum (strain 5A)).